The following is a 472-amino-acid chain: MKSILDGLADTTFRTITTDLLYVGSNDIQYEDIKGDMASKLGYFPQKFPLTSFRGSPFQEKMTAGDNSQLVPADQVNITEFYNKSLSSYKENEENIQCGENFMDMECFMILNPSQQLAIAVLSLTLGTFTVLENLLVLCVILHSRSLRCRPSYHFIGSLAVADLLGSVIFVYSFVDFHVFHRKDSPNVFLFKLGGVTASFTASVGSLFLTAIDRYISIHRPLAYKKIVTRPKAVVAFCLMWTIAIVIAVLPLLGWNCKKLQSVCSDIFPLIDETYLMFWIGVTSVLLLFIVYAYMYILWKAHIHAVRMIQRGTQKSIIIHTSEDGKVQVTRPDQARMDIRLAKTLVLILVVLIICWGPLLAIMVYDVFGKMNKLIKTVFAFCSMLCLLNSTVNPIIYALRSKDLRHAFRSMFPSCEGTAQPLDNSMGDSDCLHKHANNTANVHRAAENCIKNTVQIAKVTISVSTNTSAKAL.

Over 1–116 the chain is Extracellular; sequence MKSILDGLAD…CFMILNPSQQ (116 aa). The tract at residues 2–23 is required for mitochondrial localization; sequence KSILDGLADTTFRTITTDLLYV. Asparagine 77 and asparagine 83 each carry an N-linked (GlcNAc...) asparagine glycan. The helical transmembrane segment at 117–142 threads the bilayer; sequence LAIAVLSLTLGTFTVLENLLVLCVIL. Topologically, residues 143–154 are cytoplasmic; it reads HSRSLRCRPSYH. Residues 155–175 form a helical membrane-spanning segment; it reads FIGSLAVADLLGSVIFVYSFV. Over 176 to 187 the chain is Extracellular; sequence DFHVFHRKDSPN. The helical transmembrane segment at 188 to 212 threads the bilayer; that stretch reads VFLFKLGGVTASFTASVGSLFLTAI. Residues 213–232 are Cytoplasmic-facing; that stretch reads DRYISIHRPLAYKKIVTRPK. The chain crosses the membrane as a helical span at residues 233–255; the sequence is AVVAFCLMWTIAIVIAVLPLLGW. The Extracellular portion of the chain corresponds to 256-273; the sequence is NCKKLQSVCSDIFPLIDE. Residues 274-299 traverse the membrane as a helical segment; sequence TYLMFWIGVTSVLLLFIVYAYMYILW. The Cytoplasmic segment spans residues 300-344; it reads KAHIHAVRMIQRGTQKSIIIHTSEDGKVQVTRPDQARMDIRLAKT. Residues 345–365 form a helical membrane-spanning segment; it reads LVLILVVLIICWGPLLAIMVY. At 366–377 the chain is on the extracellular side; sequence DVFGKMNKLIKT. The chain crosses the membrane as a helical span at residues 378 to 399; that stretch reads VFAFCSMLCLLNSTVNPIIYAL. Topologically, residues 400–472 are cytoplasmic; that stretch reads RSKDLRHAFR…VSTNTSAKAL (73 aa). Cysteine 415 carries S-palmitoyl cysteine lipidation. 2 positions are modified to phosphoserine: serine 425 and serine 429.

Belongs to the G-protein coupled receptor 1 family. As to quaternary structure, interacts (via C-terminus) with CNRIP1; this interaction attenuates constitutive, but not agonist-dependent, inhibition of voltage-gated Ca(2+) channels in neurons. Associates with G protein alpha subunits, including G(i) alpha-1/GNAI1, G(i) alpha-3/GNAI3 and G(o)-alpha/GNAO1; palmitoylation is important for interaction with GNAI3 and GNAO1. In terms of processing, palmitoylation at Cys-415 is important for recruitment at plasma membrane and lipid rafts and association with G protein alpha subunits. As to expression, expressed in cerebral arterial muscle cells and cerebral cortex (at protein level).

It localises to the cell membrane. It is found in the membrane raft. The protein localises to the mitochondrion outer membrane. The protein resides in the cell projection. Its subcellular location is the axon. It localises to the presynapse. Hemopressin, a peptide derived from hemoglobin subunit alpha (HBA1 and/or HBA2), acts as an antagonist peptide: hemopressin-binding efficiently blocks cannabinoid receptor CNR1 and subsequent signaling. In terms of biological role, G-protein coupled receptor for endogenous cannabinoids (eCBs), including N-arachidonoylethanolamide (also called anandamide or AEA) and 2-arachidonoylglycerol (2-AG), as well as phytocannabinoids, such as delta(9)-tetrahydrocannabinol (THC). Mediates many cannabinoid-induced effects, acting, among others, on food intake, memory loss, gastrointestinal motility, catalepsy, ambulatory activity, anxiety, chronic pain. Signaling typically involves reduction in cyclic AMP. In the hypothalamus, may have a dual effect on mitochondrial respiration depending upon the agonist dose and possibly upon the cell type. Increases respiration at low doses, while decreases respiration at high doses. At high doses, CNR1 signal transduction involves G-protein alpha-i protein activation and subsequent inhibition of mitochondrial soluble adenylate cyclase, decrease in cyclic AMP concentration, inhibition of protein kinase A (PKA)-dependent phosphorylation of specific subunits of the mitochondrial electron transport system, including NDUFS2. In the hypothalamus, inhibits leptin-induced reactive oxygen species (ROS) formation and mediates cannabinoid-induced increase in SREBF1 and FASN gene expression. In response to cannabinoids, drives the release of orexigenic beta-endorphin, not that of melanocyte-stimulating hormone alpha/alpha-MSH, from hypothalamic POMC neurons, hence promoting food intake. In the hippocampus, regulates cellular respiration and energy production in response to cannabinoids. Involved in cannabinoid-dependent depolarization-induced suppression of inhibition (DSI), a process in which depolarization of CA1 postsynaptic pyramidal neurons mobilizes eCBs, which retrogradely activate presynaptic CB1 receptors, transiently decreasing GABAergic inhibitory neurotransmission. Also reduces excitatory synaptic transmission. In superior cervical ganglions and cerebral vascular smooth muscle cells, inhibits voltage-gated Ca(2+) channels in a constitutive, as well as agonist-dependent manner. In cerebral vascular smooth muscle cells, inhibition of voltage-gated Ca(2+) channels leads to vasodilation and decrease in vascular tone. Induces leptin production in adipocytes and reduces LRP2-mediated leptin clearance in the kidney, hence participating in hyperleptinemia. In adipose tissue, CNR1 signaling leads to increased expression of SREBF1, ACACA and FASN genes. In the liver, activation by endocannabinoids leads to increased de novo lipogenesis and reduced fatty acid catabolism, associated with increased expression of SREBF1/SREBP-1, GCK, ACACA, ACACB and FASN genes. May also affect de novo cholesterol synthesis and HDL-cholesteryl ether uptake. Peripherally modulates energy metabolism. In high carbohydrate diet-induced obesity, may decrease the expression of mitochondrial dihydrolipoyl dehydrogenase/DLD in striated muscles, as well as that of selected glucose/ pyruvate metabolic enzymes, hence affecting energy expenditure through mitochondrial metabolism. In response to cannabinoid anandamide, elicits a pro-inflammatory response in macrophages, which involves NLRP3 inflammasome activation and IL1B and IL18 secretion. In macrophages infiltrating pancreatic islets, this process may participate in the progression of type-2 diabetes and associated loss of pancreatic beta-cells. The protein is Cannabinoid receptor 1 (CNR1) of Felis catus (Cat).